Reading from the N-terminus, the 376-residue chain is UDP-N-acetylenolpyruvoylglucosamine reductase (376 aa).

The region spanning Val48–Gly219 is the FAD-binding PCMH-type domain. Residue Arg196 is part of the active site. The Proton donor role is filled by Ser274. Residue Glu368 is part of the active site.

Belongs to the MurB family. It depends on FAD as a cofactor.

The protein resides in the cytoplasm. The enzyme catalyses UDP-N-acetyl-alpha-D-muramate + NADP(+) = UDP-N-acetyl-3-O-(1-carboxyvinyl)-alpha-D-glucosamine + NADPH + H(+). The protein operates within cell wall biogenesis; peptidoglycan biosynthesis. Cell wall formation. The chain is UDP-N-acetylenolpyruvoylglucosamine reductase from Cutibacterium acnes (strain DSM 16379 / KPA171202) (Propionibacterium acnes).